Reading from the N-terminus, the 154-residue chain is Zinc finger HIT domain-containing protein 1 (154 aa).

Positions 1–72 (MVEKKTSVRS…DTGKKKKKTR (72 aa)) are disordered. The segment covering 14–23 (GQRRVLDRAA) has biased composition (basic and acidic residues). A coiled-coil region spans residues 23-39 (ARQRRINRQLEALENDN). Positions 38–47 (DNFQDDPHAG) match the Nuclear localization signal motif. The interval 72–110 (RGDHFKLRFRKNFQALLEEQNLSVAEGPNYLTACAGPPS) is interaction with NR1D2. The residue at position 103 (Thr-103) is a Phosphothreonine; by MAPK11 and MAPK14. Zn(2+) contacts are provided by Cys-117, Cys-120, Cys-128, Cys-131, Cys-136, Cys-140, His-144, and Cys-149. An HIT-type zinc finger spans residues 117 to 149 (CAVCGFPSPYTCVSCGARYCTVRCLGTHQETRC).

The protein belongs to the ZNHIT1 family. Component of the chromatin-remodeling SRCAP complex composed of at least SRCAP, DMAP1, RUVBL1, RUVBL2, ACTL6A, YEATS4, ACTR6 and ZNHIT1. Interacts with MAPK11 and MAPK14. Interacts with NR1D1 and NR2D2. Interacts (via HIT-type zinc finger) with the RUVBL1/RUVBL2 complex in the presence of ADP. Interacts with histone deacetylase HDAC1. Interacts with histone H2AZ1; the interaction results in recruitment of H2AZ1 to the MYOG promoter region. Interacts with PCID2; the interaction results in inhibition of SRCAP complex activity, preventing the deposition of histone variant H2Az1 to lymphoid fate regulator genes and restricting lymphoid lineage commitment. Post-translationally, phosphorylated on Thr by MAPK11 or MAPK14. Phosphorylation is required for MYOG induction, for deposition of histone H2AZ1 at the MYOG promoter and for SRCAP complex integrity.

Its subcellular location is the nucleus. Functionally, plays a role in chromatin remodeling by promoting the incorporation of histone variant H2AZ1/H2A.Z into the genome to regulate gene expression. Promotes SRCAP complex-mediated deposition of histone variant H2AZ1 to lymphoid fate regulator genes, enhancing lymphoid lineage commitment. Recruited to the promoter of the transcriptional activator MYOG at the early stages of muscle differentiation where it mediates binding of histone H2AZ1 to chromatin and induces muscle-specific gene expression. Maintains hematopoietic stem cell (HSC) quiescence by determining the chromatin accessibility at distal enhancers of HSC quiescence genes such as PTEN, FSTL1 and KLF4, enhancing deposition of H2AZ1 to promote their sustained transcription and restricting PI3K-AKT signaling inhibition. Plays a role in intestinal stem cell maintenance by promoting H2AZ1 deposition at the transcription start sites of genes involved in intestinal stem cell fate determination including LGR5, TGFB1 and TGFBR2, thereby contributing to gene transcription. Promotes phosphorylation of the H2AZ1 chaperone VPS72/YL1 which enhances the interaction between HZAZ1 and VPS72. Regulates the entry of male germ cells into meiosis by controlling histone H2AZ1 deposition which facilitates the expression of meiotic genes such as MEIOSIN, leading to the initiation of meiosis. Required for postnatal heart function through its role in maintenance of cardiac Ca(2+) homeostasis by modulating the expression of Ca(2+)-regulating proteins CASQ1 and ATP2A2/SERCA2A via deposition of histone H2AZ1 at their promoters. During embryonic heart development, required for mitochondrial maturation and oxidative metabolism by functioning through H2AZ1 deposition to activate transcription of metabolic genes and is also required to maintain the stability of the respiratory complex. In neural cells, increases deposition of the H2AZ1 histone variant and promotes neurite growth. Plays a role in TP53/p53-mediated apoptosis induction by stimulating the transcriptional activation of several proapoptotic p53 target genes such as PMAIP1/NOXA and BBC3/PUMA. Mediates cell cycle arrest induced in response to gamma-irradiation by enhancing recruitment of TP53/p53 to the promoter of the cell cycle inhibitor CDKN1A, leading to its transcriptional activation. Recruited to the promoter of cyclin-dependent kinase CDK6 and inhibits its transcription, possibly by decreasing the acetylation level of histone H4, leading to cell cycle arrest at the G1 phase. Plays a role in lens fiber cell differentiation by regulating the expression of cell cycle regulator CDKN1A/p21Cip1. Binds to transcriptional repressor NR1D2 and relieves it of its inhibitory effect on the transcription of apolipoprotein APOC3 without affecting its DNA-binding activity. This is Zinc finger HIT domain-containing protein 1 (ZNHIT1) from Bos taurus (Bovine).